The primary structure comprises 233 residues: Ribosomal RNA-processing protein 14-C (233 aa).

A coiled-coil region spans residues 32-65 (DRALLLQRRKEKAKARAEAKKLAKKESKAKQESK). The span at 47–64 (RAEAKKLAKKESKAKQES) shows a compositional bias: basic and acidic residues. 3 disordered regions span residues 47 to 87 (RAEA…DNHK), 130 to 149 (KRRI…ESDK), and 164 to 233 (DNEQ…SKKK). Ser-75 is modified (phosphoserine). A coiled-coil region spans residues 122-223 (ALKHLEAKKR…ESKKSKKGKA (102 aa)). 2 stretches are compositionally biased toward basic and acidic residues: residues 133-149 (IESM…ESDK) and 180-209 (KKKS…EENL). Over residues 210–233 (KKRRESKKSKKGKAPKKKKPSKKK) the composition is skewed to basic residues.

It belongs to the SURF6 family. As to quaternary structure, component of the 90S and 60S pre-ribosomal particles.

Its subcellular location is the nucleus. The protein resides in the nucleolus. Functionally, involved in ribosome biogenesis and cell polarity. Required for the synthesis of both 40S and 60S ribosomal subunits and may also play some direct role in correct positioning of the mitotic spindle during mitosis. The sequence is that of Ribosomal RNA-processing protein 14-C (rrp14c) from Schizosaccharomyces pombe (strain 972 / ATCC 24843) (Fission yeast).